A 748-amino-acid chain; its full sequence is Peptidyl serine alpha-galactosyltransferase (748 aa).

Residues 1 to 26 form the signal peptide; sequence MVAVFHGPLVLGALLLLLALQHGASA. The Extracellular portion of the chain corresponds to 27–710; it reads EEPGFANRTG…GPSLHSLLGR (684 aa). N33, N184, and N297 each carry an N-linked (GlcNAc...) asparagine glycan. A ShKT domain is found at 415–449; sequence CQDFHPKCEEWKESGECTKNENYMTENCRKTCDKC. 3 disulfides stabilise this stretch: C415–C449, C422–C442, and C431–C446. Disordered stretches follow at residues 474-576 and 611-670; these read ELQP…ADPK and EVPK…KKNI. Positions 531 to 565 are enriched in pro residues; it reads SPPPSPPPASPPPVDSPPPMSPPPESPSPDKPPPK. The segment covering 611–637 has biased composition (basic and acidic residues); it reads EVPKRTKATDEEEEAPKAKHAESHLTL. The chain crosses the membrane as a helical span at residues 711–731; it reads LNTWQALVLWLVVVVAFLALV. The Cytoplasmic segment spans residues 732 to 748; that stretch reads PRIAKLRRRQRSGMRTE.

Mn(2+) is required as a cofactor.

Its subcellular location is the membrane. In terms of biological role, glycosyltransferase involved in the O-galactosylation of several proteins including extensins. Catalyzes the transfer of alpha-galactosyl to Ser residues. Hydroxylation of proline residues adjacent to the serine acceptor is required for activity. Utilizes selectively UDP-galactose as a donor nucleotide sugar. This Chlamydomonas reinhardtii (Chlamydomonas smithii) protein is Peptidyl serine alpha-galactosyltransferase.